The sequence spans 187 residues: DNA-3-methyladenine glycosylase 1 (187 aa).

Cysteine 4, histidine 17, histidine 175, and cysteine 179 together coordinate Zn(2+).

It catalyses the reaction Hydrolysis of alkylated DNA, releasing 3-methyladenine.. With respect to regulation, activity is controlled by product inhibition. Functionally, hydrolysis of the deoxyribose N-glycosidic bond to excise 3-methyladenine from the damaged DNA polymer formed by alkylation lesions. This is DNA-3-methyladenine glycosylase 1 from Escherichia coli (strain K12).